The chain runs to 423 residues: MDIEVKKKRFLKGVISVPGDKSISHRAVMIGSIAEGITEIENFLLGEDCISTINCMKNLGVDIELKGTNVKVQGKGLYLNKSEKILDVGNSGTTIRLLMGILAGQKFETTLTGDDSIKRRPMGRVITPLSMMGAKIEAREGNFAPLTVFGNKLKGIYYKMPIASAQVKSSIMLASLYADDKTTIEEPYPSRNHTELMFSSFGAKVEVNGTKITCYPGYKLQGQKVIVPGDISSAAYFIVAATLVPNSEVTIKNVNVNPTRTGIIDVIKEMGGDIVLTNERTINNEKVADITVKTSRLKGIEIGGSLIPRLIDEIPVIAVAAVFAEGKTVIKDAEELKVKESNRINTITSELKKMGAKIFETEDGMIIEGTGFLKGNTVESYNDHRIAMSLWVAGLMAEGETKIKNAECVNISYPDFYKTFDML.

3-phosphoshikimate contacts are provided by lysine 21, serine 22, and arginine 26. Lysine 21 is a binding site for phosphoenolpyruvate. Residues glycine 92 and arginine 120 each contribute to the phosphoenolpyruvate site. Positions 164, 166, 312, and 339 each coordinate 3-phosphoshikimate. Glutamine 166 contacts phosphoenolpyruvate. Aspartate 312 functions as the Proton acceptor in the catalytic mechanism. The phosphoenolpyruvate site is built by arginine 343 and arginine 385.

This sequence belongs to the EPSP synthase family. As to quaternary structure, monomer.

Its subcellular location is the cytoplasm. The enzyme catalyses 3-phosphoshikimate + phosphoenolpyruvate = 5-O-(1-carboxyvinyl)-3-phosphoshikimate + phosphate. The protein operates within metabolic intermediate biosynthesis; chorismate biosynthesis; chorismate from D-erythrose 4-phosphate and phosphoenolpyruvate: step 6/7. Catalyzes the transfer of the enolpyruvyl moiety of phosphoenolpyruvate (PEP) to the 5-hydroxyl of shikimate-3-phosphate (S3P) to produce enolpyruvyl shikimate-3-phosphate and inorganic phosphate. The chain is 3-phosphoshikimate 1-carboxyvinyltransferase from Thermoanaerobacter pseudethanolicus (strain ATCC 33223 / 39E) (Clostridium thermohydrosulfuricum).